Reading from the N-terminus, the 187-residue chain is MNAKTITLKKKRKIKTIVVLSIIMIAALIFTIRLVFYKPFLIEGSSMAPTLKDSERILVDKAVKWTGGFHRGDIIVIHDKKSGRSFVKRLIGLPGDSIKMKNDQLYINDKKVEEPYLKEYKQEVKESGVTLTGDFEVEVPSGKYFVMGDNRLNSLDSRNGMGMPSEDDIIGTESLVFYPFGEMRQAK.

Residues 1-16 lie on the Cytoplasmic side of the membrane; that stretch reads MNAKTITLKKKRKIKT. Residues 17-37 traverse the membrane as a helical segment; that stretch reads IVVLSIIMIAALIFTIRLVFY. Residues 38-187 lie on the Extracellular side of the membrane; it reads KPFLIEGSSM…YPFGEMRQAK (150 aa). Residues serine 46 and lysine 88 contribute to the active site.

This sequence belongs to the peptidase S26 family.

The protein localises to the cell membrane. The enzyme catalyses Cleavage of hydrophobic, N-terminal signal or leader sequences from secreted and periplasmic proteins.. The sequence is that of Signal peptidase I U (sipU) from Bacillus subtilis (strain 168).